Reading from the N-terminus, the 573-residue chain is 60 kDa heat shock protein, mitochondrial (573 aa).

The N-terminal 26 residues, 1–26, are a transit peptide targeting the mitochondrion; sequence MLRLPTVFRQMRPVSRVLAPHLTRAY. Residue Lys31 is modified to N6-succinyllysine. Phosphoserine is present on residues Ser67 and Ser70. Residue Lys75 participates in ATP binding. Lys75 is subject to N6-acetyllysine. Residue Lys82 is modified to N6-acetyllysine; alternate. Position 82 is an N6-succinyllysine; alternate (Lys82). An N6-acetyllysine modification is found at Lys87. Tyr90 is modified (phosphotyrosine). Position 91 is an N6-acetyllysine (Lys91). An ATP-binding site is contributed by 111 to 115; the sequence is DGTTT. Lys125 is subject to N6-acetyllysine; alternate. At Lys125 the chain carries N6-succinyllysine; alternate. The residue at position 130 (Lys130) is an N6-acetyllysine. At Lys133 the chain carries N6-acetyllysine; alternate. Residue Lys133 is modified to N6-succinyllysine; alternate. Position 133 is an N6-malonyllysine; alternate (Lys133). Lys156 bears the N6-acetyllysine mark. 5 positions are modified to N6-acetyllysine; alternate: Lys191, Lys202, Lys205, Lys218, and Lys236. 5 positions are modified to N6-succinyllysine; alternate: Lys191, Lys202, Lys205, Lys218, and Lys236. Lys249 is subject to N6-acetyllysine. N6-acetyllysine; alternate is present on Lys250. Lys250 carries the post-translational modification N6-succinyllysine; alternate. 2 positions are modified to N6-acetyllysine: Lys269 and Lys292. Lys301 is subject to N6-succinyllysine. Lys314 is subject to N6-acetyllysine. An N6-acetyllysine; alternate modification is found at Lys352. Lys352 is modified (N6-succinyllysine; alternate). Lys359 and Lys389 each carry N6-acetyllysine. N6-acetyllysine; alternate is present on Lys396. Lys396 carries the post-translational modification N6-succinyllysine; alternate. Ser410 bears the Phosphoserine mark. Gly440 is a binding site for ATP. Lys469 bears the N6-acetyllysine mark. N6-acetyllysine; alternate is present on Lys481. Lys481 is subject to N6-succinyllysine; alternate. Phosphoserine is present on Ser488. Asp520 contributes to the ATP binding site. Residue Lys551 forms a Glycyl lysine isopeptide (Lys-Gly) (interchain with G-Cter in SUMO2) linkage.

This sequence belongs to the chaperonin (HSP60) family. As to quaternary structure, homoheptamer arranged in a ring structure. The functional units of these chaperonins consist of heptameric rings of the large subunit Hsp60, which function as a back-to-back double ring. Interacts with 2 heptameric Hsp10 rings to form the symmetrical football complex. Interacts with HRAS. Interacts with ATAD3A. Interacts with ETFBKMT and EEF1AKMT3. Interacts with MFHAS1. (Microbial infection) Interacts with hepatitis B virus/HBV protein X. In terms of assembly, (Microbial infection) Interacts with HTLV-1 protein p40tax.

The protein resides in the mitochondrion matrix. The enzyme catalyses ATP + H2O + a folded polypeptide = ADP + phosphate + an unfolded polypeptide.. Functionally, chaperonin implicated in mitochondrial protein import and macromolecular assembly. Together with Hsp10, facilitates the correct folding of imported proteins. May also prevent misfolding and promote the refolding and proper assembly of unfolded polypeptides generated under stress conditions in the mitochondrial matrix. The functional units of these chaperonins consist of heptameric rings of the large subunit Hsp60, which function as a back-to-back double ring. In a cyclic reaction, Hsp60 ring complexes bind one unfolded substrate protein per ring, followed by the binding of ATP and association with 2 heptameric rings of the co-chaperonin Hsp10. This leads to sequestration of the substrate protein in the inner cavity of Hsp60 where, for a certain period of time, it can fold undisturbed by other cell components. Synchronous hydrolysis of ATP in all Hsp60 subunits results in the dissociation of the chaperonin rings and the release of ADP and the folded substrate protein. The sequence is that of 60 kDa heat shock protein, mitochondrial (HSPD1) from Homo sapiens (Human).